The primary structure comprises 702 residues: MALSYLRPWVSLLLADMALLGLLQGSLGNLLPQGLPGLWIEGTLRLGVLWGLLKVGELLGLVGTLLPLLCLATPLFFSLRALVGGTASTSVVRVASASWGWLLAGYGAVALSWAVWAVLSPAGVQEKEPGQENRTLMKRLLKLSRPDLPFLIAAFFFLVVAVWGETLIPRYSGRVIDILGGDFDPDAFASAIFFMCLFSVGSSFSAGCRGGSFLFTMSRINLRIREQLFSSLLRQDLGFFQETKTGELNSRLSSDTSLMSRWLPFNANILLRSLVKVVGLYFFMLQVSPRLTFLSLLDLPLTIAAEKVYNPRHQAVLKEIQDAVAKAGQVVREAVGGLQTVRSFGAEEQEVSHYKEALERCRQLWWRRDLEKDVYLVIRRVMALGMQVLILNCGVQQILAGEVTRGGLLSFLLYQEEVGQYVRNLVYMYGDMLSNVGAAEKVFSYLDRKPNLPQPGILAPPWLEGRVEFQDVSFSYPRRPEKPVLQGLTFTLHPGTVTALVGPNGSGKSTVAALLQNLYQPTGGQLLLDGEPLTEYDHHYLHRQVVLVGQEPVLFSGSVKDNIAYGLRDCEDAQVMAAAQAACADDFIGEMTNGINTEIGEKGGQLAVGQKQRLAIARALVRNPRVLILDEATSALDAQCEQALQNWRSQGDRTMLVIAHRLHTVQNADQVLVLKQGRLVEHDQLRDGQDVYAHLVQQRLEA.

Residues 1–6 (MALSYL) lie on the Lumenal side of the membrane. Residues 7–27 (RPWVSLLLADMALLGLLQGSL) form a helical membrane-spanning segment. Topologically, residues 28–56 (GNLLPQGLPGLWIEGTLRLGVLWGLLKVG) are cytoplasmic. The helical transmembrane segment at 57 to 77 (ELLGLVGTLLPLLCLATPLFF) threads the bilayer. Residues 78-98 (SLRALVGGTASTSVVRVASAS) lie on the Lumenal side of the membrane. Residues 99–119 (WGWLLAGYGAVALSWAVWAVL) traverse the membrane as a helical segment. The Cytoplasmic segment spans residues 120–147 (SPAGVQEKEPGQENRTLMKRLLKLSRPD). A helical transmembrane segment spans residues 148–168 (LPFLIAAFFFLVVAVWGETLI). Positions 151–434 (LIAAFFFLVV…LVYMYGDMLS (284 aa)) constitute an ABC transmembrane type-1 domain. Residues 169 to 186 (PRYSGRVIDILGGDFDPD) lie on the Lumenal side of the membrane. A helical transmembrane segment spans residues 187-207 (AFASAIFFMCLFSVGSSFSAG). The Cytoplasmic portion of the chain corresponds to 208-265 (CRGGSFLFTMSRINLRIREQLFSSLLRQDLGFFQETKTGELNSRLSSDTSLMSRWLPF). A helical membrane pass occupies residues 266–286 (NANILLRSLVKVVGLYFFMLQ). Residues 287–292 (VSPRLT) are Lumenal-facing. Residues 293-313 (FLSLLDLPLTIAAEKVYNPRH) form a helical membrane-spanning segment. Residues 300–388 (PLTIAAEKVY…RRVMALGMQV (89 aa)) form a part of the peptide-binding site region. Topologically, residues 314–373 (QAVLKEIQDAVAKAGQVVREAVGGLQTVRSFGAEEQEVSHYKEALERCRQLWWRRDLEKD) are cytoplasmic. Residues 374-394 (VYLVIRRVMALGMQVLILNCG) form a helical membrane-spanning segment. Topologically, residues 395–407 (VQQILAGEVTRGG) are lumenal. The chain crosses the membrane as a helical span at residues 408-428 (LLSFLLYQEEVGQYVRNLVYM). Residues 413–432 (LYQEEVGQYVRNLVYMYGDM) are part of the peptide-binding site. The Cytoplasmic segment spans residues 429–702 (YGDMLSNVGA…AHLVQQRLEA (274 aa)). An ABC transporter domain is found at 467 to 701 (VEFQDVSFSY…YAHLVQQRLE (235 aa)). 502–509 (GPNGSGKS) contacts ATP.

It belongs to the ABC transporter superfamily. ABCB family. MHC peptide exporter (TC 3.A.1.209) subfamily. In terms of assembly, heterodimer of TAP1 and TAP2 (TAP1-TAP2). A component of the peptide loading complex (PLC), interacts via TAPBP with MHCI heterodimer; this interaction mediates peptide-MHCI assembly. It depends on Mg(2+) as a cofactor.

It localises to the endoplasmic reticulum membrane. It catalyses the reaction a peptide antigen(in) + ATP + H2O = a peptide antigen(out) + ADP + phosphate + H(+). Its function is as follows. ABC transporter associated with antigen processing. In complex with TAP1 mediates unidirectional translocation of peptide antigens from cytosol to endoplasmic reticulum (ER) for loading onto MHC class I (MHCI) molecules. Uses the chemical energy of ATP to export peptides against the concentration gradient. During the transport cycle alternates between 'inward-facing' state with peptide binding site facing the cytosol to 'outward-facing' state with peptide binding site facing the ER lumen. Peptide antigen binding to ATP-loaded TAP1-TAP2 induces a switch to hydrolysis-competent 'outward-facing' conformation ready for peptide loading onto nascent MHCI molecules. Subsequently ATP hydrolysis resets the transporter to the 'inward facing' state for a new cycle. As a component of the peptide loading complex (PLC), acts as a molecular scaffold essential for peptide-MHCI assembly and antigen presentation. This Mus musculus (Mouse) protein is Antigen peptide transporter 2 (Tap2).